Reading from the N-terminus, the 273-residue chain is Putative pyruvate, phosphate dikinase regulatory protein 2 (273 aa).

151 to 158 (GVSRTSKT) contacts ADP.

It belongs to the pyruvate, phosphate/water dikinase regulatory protein family. PDRP subfamily.

The enzyme catalyses N(tele)-phospho-L-histidyl/L-threonyl-[pyruvate, phosphate dikinase] + ADP = N(tele)-phospho-L-histidyl/O-phospho-L-threonyl-[pyruvate, phosphate dikinase] + AMP + H(+). The catalysed reaction is N(tele)-phospho-L-histidyl/O-phospho-L-threonyl-[pyruvate, phosphate dikinase] + phosphate + H(+) = N(tele)-phospho-L-histidyl/L-threonyl-[pyruvate, phosphate dikinase] + diphosphate. Functionally, bifunctional serine/threonine kinase and phosphorylase involved in the regulation of the pyruvate, phosphate dikinase (PPDK) by catalyzing its phosphorylation/dephosphorylation. In Syntrophomonas wolfei subsp. wolfei (strain DSM 2245B / Goettingen), this protein is Putative pyruvate, phosphate dikinase regulatory protein 2.